The sequence spans 637 residues: Chaperone protein HtpG (637 aa).

The tract at residues 1–345 (MTAAQKETLG…SNDLPLNVSR (345 aa)) is a; substrate-binding. The interval 346 to 562 (EILQDNKVTQ…DNDMSSQMQK (217 aa)) is b. A c region spans residues 563–637 (LMESVGQAAP…LNKLMLELSK (75 aa)).

The protein belongs to the heat shock protein 90 family. In terms of assembly, homodimer.

It is found in the cytoplasm. Its function is as follows. Molecular chaperone. Has ATPase activity. This is Chaperone protein HtpG from Pseudoalteromonas translucida (strain TAC 125).